Reading from the N-terminus, the 450-residue chain is MLAVAVLAAGKGTRMKSALPKVLQPLAGATLVERVLASAGNLQPERRLLIVGHQAERVEQQLAPLGGLEFVLQQPQNGTGHAVQQLIPSLQGFEGELLVLNGDVPLLRSETVEALVEQHRASGADVTLLTARLEDPTGYGRVFADADGQVSSIIEHRDCTDEQRSNNLTNAGIYCFNWTALANVLPKLSTDNDQGELYLTDTVAMLPKAMHLEVADADEVNGINNRRQLAQCEALLQQRLRHHWMDEGVTFIDPESCTLSEGCSFGRDVVIDPQTHFRGRCVIGDNSRIGPGSLIEDASVGTNVSVVHSVVREASIGNDVAIGPFAHLRPAADVGDGCRIGNFVEVKKSQLGAGTKVNHLSYIGDAQLGEKVNVGAGTITANYDGVNKHRTMIGSNSKTGANSVLVAPINVGERATIGAGSTITKDVADGALAIGRARQMTKEGWAERKV.

Residues 1–226 (MLAVAVLAAG…ADEVNGINNR (226 aa)) are pyrophosphorylase. Residues 7 to 10 (LAAG), K21, Q73, and 78 to 79 (GT) contribute to the UDP-N-acetyl-alpha-D-glucosamine site. D103 serves as a coordination point for Mg(2+). Residues G140, E155, N170, and N224 each coordinate UDP-N-acetyl-alpha-D-glucosamine. N224 contacts Mg(2+). Residues 227-247 (RQLAQCEALLQQRLRHHWMDE) form a linker region. The interval 248–450 (GVTFIDPESC…TKEGWAERKV (203 aa)) is N-acetyltransferase. Residues R329 and K347 each coordinate UDP-N-acetyl-alpha-D-glucosamine. The active-site Proton acceptor is H359. 2 residues coordinate UDP-N-acetyl-alpha-D-glucosamine: Y362 and N373. Residues A376, 382–383 (NY), A419, and R436 contribute to the acetyl-CoA site.

The protein in the N-terminal section; belongs to the N-acetylglucosamine-1-phosphate uridyltransferase family. This sequence in the C-terminal section; belongs to the transferase hexapeptide repeat family. Homotrimer. It depends on Mg(2+) as a cofactor.

It localises to the cytoplasm. It catalyses the reaction alpha-D-glucosamine 1-phosphate + acetyl-CoA = N-acetyl-alpha-D-glucosamine 1-phosphate + CoA + H(+). The enzyme catalyses N-acetyl-alpha-D-glucosamine 1-phosphate + UTP + H(+) = UDP-N-acetyl-alpha-D-glucosamine + diphosphate. The protein operates within nucleotide-sugar biosynthesis; UDP-N-acetyl-alpha-D-glucosamine biosynthesis; N-acetyl-alpha-D-glucosamine 1-phosphate from alpha-D-glucosamine 6-phosphate (route II): step 2/2. It participates in nucleotide-sugar biosynthesis; UDP-N-acetyl-alpha-D-glucosamine biosynthesis; UDP-N-acetyl-alpha-D-glucosamine from N-acetyl-alpha-D-glucosamine 1-phosphate: step 1/1. Its pathway is bacterial outer membrane biogenesis; LPS lipid A biosynthesis. Catalyzes the last two sequential reactions in the de novo biosynthetic pathway for UDP-N-acetylglucosamine (UDP-GlcNAc). The C-terminal domain catalyzes the transfer of acetyl group from acetyl coenzyme A to glucosamine-1-phosphate (GlcN-1-P) to produce N-acetylglucosamine-1-phosphate (GlcNAc-1-P), which is converted into UDP-GlcNAc by the transfer of uridine 5-monophosphate (from uridine 5-triphosphate), a reaction catalyzed by the N-terminal domain. This is Bifunctional protein GlmU from Synechococcus sp. (strain CC9605).